A 236-amino-acid polypeptide reads, in one-letter code: Orotidine 5'-phosphate decarboxylase (236 aa).

Substrate-binding positions include Asp12, Lys34, 60–69, Thr123, Arg184, Gln193, Gly213, and Arg214; that span reads DLKLHDIPHT. Lys62 (proton donor) is an active-site residue.

It belongs to the OMP decarboxylase family. Type 1 subfamily. In terms of assembly, homodimer.

The enzyme catalyses orotidine 5'-phosphate + H(+) = UMP + CO2. Its pathway is pyrimidine metabolism; UMP biosynthesis via de novo pathway; UMP from orotate: step 2/2. Its function is as follows. Catalyzes the decarboxylation of orotidine 5'-monophosphate (OMP) to uridine 5'-monophosphate (UMP). The protein is Orotidine 5'-phosphate decarboxylase of Gluconobacter oxydans (strain 621H) (Gluconobacter suboxydans).